The chain runs to 126 residues: Holo-[acyl-carrier-protein] synthase (126 aa).

Mg(2+) is bound by residues Asp8 and Glu57.

Belongs to the P-Pant transferase superfamily. AcpS family. Mg(2+) serves as cofactor.

It is found in the cytoplasm. It catalyses the reaction apo-[ACP] + CoA = holo-[ACP] + adenosine 3',5'-bisphosphate + H(+). In terms of biological role, transfers the 4'-phosphopantetheine moiety from coenzyme A to a Ser of acyl-carrier-protein. The chain is Holo-[acyl-carrier-protein] synthase from Halorhodospira halophila (strain DSM 244 / SL1) (Ectothiorhodospira halophila (strain DSM 244 / SL1)).